The primary structure comprises 267 residues: Small ribosomal subunit protein uS2 (267 aa).

Residues 225-267 form a disordered region; it reads LREQELEGEEQEEAAPATEEEKKELIEEAVAEGEAEETEEEEK. Over residues 251-267 the composition is skewed to acidic residues; the sequence is EEAVAEGEAEETEEEEK.

It belongs to the universal ribosomal protein uS2 family.

In Nitratiruptor sp. (strain SB155-2), this protein is Small ribosomal subunit protein uS2.